The chain runs to 508 residues: MDLKQQYILALDEGTSSCRTIVFDKDLNQVAIAQNEFNQFFPKSGWVEQDPLEIWSVQLATMQSAKNKAQIKSNNIAAVGITNQRETIVLWNKENGLPVYNAIVWQDQRTASLCDKLNQDTKIKEFVKKHTGLPINPYFSATKIAWILENVPLAQKMLKEDKLLAGTIDTWLIWKLTGGKMHVTDVSNASRTLLFDITTMTWSQELGDIFKVPLSILPKVMPSNAHFGDIVPSHWSTSATGMVPIRGVAGDQQAALFGQLCVEPAMVKNTYGTGCFMLMNIGNELKYSQHNLLTTVAWQLENQKPVYALEGSVFVAGAALKWLRDSLKVMYSAAESDFYAKLAQKEEQEVVFVPAFTGLGAPYWDASARGAIFGIEANTKREHLVKATLEAIAFQANDLIKAMASDLNSSIKKIKADGGACNSNYLMQFQADIANLEVIIPKNVETTTMGAAFLAGLAVNYWKDTKQLEKLTGIAKQFKSQMNQTVREKKSKRWNEAVKRTLKWASLD.

Thr-15 is a binding site for ADP. ATP is bound by residues Thr-15, Ser-16, and Ser-17. Thr-15 provides a ligand contact to sn-glycerol 3-phosphate. Residue Arg-19 participates in ADP binding. Residues Arg-85, Glu-86, Tyr-138, and Asp-251 each contribute to the sn-glycerol 3-phosphate site. 5 residues coordinate glycerol: Arg-85, Glu-86, Tyr-138, Asp-251, and Gln-252. The ADP site is built by Thr-273, Gly-317, and Gly-419. Thr-273, Gly-317, and Gly-419 together coordinate ATP.

It belongs to the FGGY kinase family.

The catalysed reaction is glycerol + ATP = sn-glycerol 3-phosphate + ADP + H(+). It participates in polyol metabolism; glycerol degradation via glycerol kinase pathway; sn-glycerol 3-phosphate from glycerol: step 1/1. Its activity is regulated as follows. Inhibited by fructose 1,6-bisphosphate (FBP). Key enzyme in the regulation of glycerol uptake and metabolism. Catalyzes the phosphorylation of glycerol to yield sn-glycerol 3-phosphate. This chain is Glycerol kinase, found in Mycoplasma pneumoniae (strain ATCC 29342 / M129 / Subtype 1) (Mycoplasmoides pneumoniae).